The chain runs to 94 residues: Bacterial microcompartment shell protein PduA (94 aa).

The 85-residue stretch at 5-89 folds into the BMC domain; the sequence is ALGMVETKGL…PHTDVEKILP (85 aa).

The protein belongs to the bacterial microcompartments protein family. In terms of assembly, homohexamer with a central pore of about 5.6 Angstroms in diameter. The hexamers pack against each other in arrays. Interacts with the N-terminus of PduP which targets PduP to the BMC. Modeling suggests PduC, PduD, PduE, PduL and PduP interact with a cleft formed by the C-terminal segments of 2 adjacent PduA subunits (on the BMC luminal side) in the hexamer.

It localises to the bacterial microcompartment. It participates in polyol metabolism; 1,2-propanediol degradation. One of the major shell proteins of the bacterial microcompartment (BMC) dedicated to 1,2-propanediol (1,2-PD) degradation. At least one of PduA or PduJ is required for BMC assembly; it must be encoded as the first gene in the pdu operon. Not required for structural integrity of BMCs, it is required to mitigate propionaldehyde toxicity. Controls diffusion of 1,2-PD into and propionaldehyde out of the BMC shell; residue 40 is particularly important for pore permeability. Overexpression of this protein leads to aberrant filaments that extend the length of the cell, cross the cleavage furrow and impair division. The filaments form nanotubes with a hollow center. The isolated BMC shell component protein ratio for J:A:B':B:K:T:U is approximately 15:10:7:6:1:1:2. Edge residues (particularly Lys-26) are important for function and assembly of the BMC, and influence array formation by hexamers. Interaction with PduA allows encapsulation of at least PduP in BMCs. Probably also targets PduD to the BMC. PduA is probably the hub for binding multiple enzymes to the interior of the BMC; modeling suggests PduC, PduD, PduE, PduG, PduL and PduP are targeted to PduA. Its function is as follows. The 1,2-PD-specific bacterial microcompartment (BMC) concentrates low levels of 1,2-PD catabolic enzymes, concentrates volatile reaction intermediates thus enhancing pathway flux and keeps the level of toxic, mutagenic propionaldehyde low. This chain is Bacterial microcompartment shell protein PduA, found in Salmonella typhimurium (strain LT2 / SGSC1412 / ATCC 700720).